The chain runs to 450 residues: Glutamate--tRNA ligase 2 (450 aa).

A 'HIGH' region motif is present at residues 10–20 (PSPTGRIHIGN). Positions 243–247 (GFSKR) match the 'KMSKS' region motif. K246 is an ATP binding site.

The protein belongs to the class-I aminoacyl-tRNA synthetase family. Glutamate--tRNA ligase type 1 subfamily. Monomer.

Its subcellular location is the cytoplasm. It catalyses the reaction tRNA(Glu) + L-glutamate + ATP = L-glutamyl-tRNA(Glu) + AMP + diphosphate. Catalyzes the attachment of glutamate to tRNA(Glu) in a two-step reaction: glutamate is first activated by ATP to form Glu-AMP and then transferred to the acceptor end of tRNA(Glu). This chain is Glutamate--tRNA ligase 2, found in Beijerinckia indica subsp. indica (strain ATCC 9039 / DSM 1715 / NCIMB 8712).